The primary structure comprises 215 residues: Protein N-lysine methyltransferase METTL21A (215 aa).

S-adenosyl-L-methionine-binding positions include tryptophan 47, 73-75 (GAG), aspartate 94, tryptophan 125, and alanine 141.

It belongs to the methyltransferase superfamily. METTL21 family.

The protein resides in the cytoplasm. The enzyme catalyses L-lysyl-[protein] + 3 S-adenosyl-L-methionine = N(6),N(6),N(6)-trimethyl-L-lysyl-[protein] + 3 S-adenosyl-L-homocysteine + 3 H(+). In terms of biological role, protein-lysine methyltransferase that selectively trimethylates residues in heat shock protein 70 (HSP70) family members. The protein is Protein N-lysine methyltransferase METTL21A (mettl21a) of Xenopus tropicalis (Western clawed frog).